The following is a 114-amino-acid chain: Amphinase-3 (114 aa).

His-15 (proton acceptor) is an active-site residue. Asn-25 carries N-linked (GlcNAc...) asparagine glycosylation. 4 disulfide bridges follow: Cys-26–Cys-79, Cys-41–Cys-85, Cys-59–Cys-100, and Cys-97–Cys-114. Residue 42 to 46 (KPINT) coordinates substrate. 2 N-linked (GlcNAc...) asparagine glycosylation sites follow: Asn-67 and Asn-91. His-107 serves as the catalytic Proton donor.

Belongs to the pancreatic ribonuclease family. In terms of assembly, monomer. Post-translationally, there are at least five different forms arising from glycan heterogeneity.

It is found in the secreted. Its function is as follows. Endonuclease, hydrolyzes highly polymerized RNA, poly(U) and poly(C), and the dinucleotides CpA and UpA. More active towards rCA than rUA or rUG. Has cytotoxic activity against cultured human submaxillary gland carcinoma cells. This chain is Amphinase-3, found in Lithobates pipiens (Northern leopard frog).